The following is a 379-amino-acid chain: tRNA (guanine(26)-N(2))-dimethyltransferase (379 aa).

The disordered stretch occupies residues Met1–Pro26. The 366-residue stretch at Arg4–Ile369 folds into the Trm1 methyltransferase domain. Residues Glu8–Pro25 are compositionally biased toward polar residues. S-adenosyl-L-methionine is bound by residues Arg41, Arg66, Asp82, Asp108, and Ala109. Cys237, Cys240, Cys257, and Cys260 together coordinate Zn(2+).

It belongs to the class I-like SAM-binding methyltransferase superfamily. Trm1 family.

The catalysed reaction is guanosine(26) in tRNA + 2 S-adenosyl-L-methionine = N(2)-dimethylguanosine(26) in tRNA + 2 S-adenosyl-L-homocysteine + 2 H(+). Dimethylates a single guanine residue at position 26 of a number of tRNAs using S-adenosyl-L-methionine as donor of the methyl groups. The chain is tRNA (guanine(26)-N(2))-dimethyltransferase from Methanocorpusculum labreanum (strain ATCC 43576 / DSM 4855 / Z).